Consider the following 398-residue polypeptide: Probable L-tyrosine/L-aspartate decarboxylase (398 aa).

Lys242 is modified (N6-(pyridoxal phosphate)lysine).

It belongs to the group II decarboxylase family. MfnA subfamily. It depends on pyridoxal 5'-phosphate as a cofactor.

The catalysed reaction is L-tyrosine + H(+) = tyramine + CO2. It catalyses the reaction L-aspartate + H(+) = beta-alanine + CO2. Its pathway is cofactor biosynthesis; methanofuran biosynthesis. It functions in the pathway cofactor biosynthesis; coenzyme A biosynthesis. Catalyzes the decarboxylation of L-tyrosine to produce tyramine for methanofuran biosynthesis. Can also catalyze the decarboxylation of L-aspartate to produce beta-alanine for coenzyme A (CoA) biosynthesis. The chain is Probable L-tyrosine/L-aspartate decarboxylase from Methanosarcina mazei (strain ATCC BAA-159 / DSM 3647 / Goe1 / Go1 / JCM 11833 / OCM 88) (Methanosarcina frisia).